The primary structure comprises 344 residues: Gas vesicle ATPase GvpN2 (344 aa).

The interval 1–55 (MTDTSRNRKVRGSKIRSSRSDKRQSRGSEDKELKRLADARDTDSEQAGDRVGDAF) is disordered. The span at 7-17 (NRKVRGSKIRS) shows a compositional bias: basic residues. Over residues 18–52 (SRSDKRQSRGSEDKELKRLADARDTDSEQAGDRVG) the composition is skewed to basic and acidic residues. 89–96 (GPTGCGKT) contributes to the ATP binding site.

It belongs to the CbbQ/NirQ/NorQ/GpvN family. Forms homodimers, a GvpN-GvpO heterodimer, interacts with GvpC and GvpL, might interact with GvpA.

It localises to the gas vesicle. Its subcellular location is the cytoplasm. It carries out the reaction ATP + H2O = ADP + phosphate + H(+). In terms of biological role, an ATPase that functions in gas vesicle formation. A minor component of the gas vesicle, also found in soluble extracts. Gas vesicles are hollow, gas filled proteinaceous nanostructures found in several microbial planktonic microorganisms. They allow positioning of halobacteria at the optimal depth for growth in the poorly aerated, shallow brine pools of their habitat. Functionally, expression of 2 c-vac DNA fragments containing 2 divergently transcribed regions (gvpE-gvpF-gvpG-gvpH-gvpI-gvpJ-gvpK-gvpL-gvpM and gvpA-gvpC-gvpN-gvpO) allows H.volcanii to produce gas vesicles. This is Gas vesicle ATPase GvpN2 from Halobacterium salinarum (strain ATCC 700922 / JCM 11081 / NRC-1) (Halobacterium halobium).